The chain runs to 930 residues: Protein translocase subunit SecA (930 aa).

ATP is bound by residues Gln83, 101 to 105, and Asp491; that span reads GEGKT.

It belongs to the SecA family. Monomer and homodimer. Part of the essential Sec protein translocation apparatus which comprises SecA, SecYEG and auxiliary proteins SecDF. Other proteins may also be involved.

The protein localises to the cell inner membrane. It localises to the cellular thylakoid membrane. The protein resides in the cytoplasm. The catalysed reaction is ATP + H2O + cellular proteinSide 1 = ADP + phosphate + cellular proteinSide 2.. Functionally, part of the Sec protein translocase complex. Interacts with the SecYEG preprotein conducting channel. Has a central role in coupling the hydrolysis of ATP to the transfer of proteins into and across the cell membrane, serving as an ATP-driven molecular motor driving the stepwise translocation of polypeptide chains across the membrane. Probably participates in protein translocation into and across both the cytoplasmic and thylakoid membranes in cyanobacterial cells. In Trichormus variabilis (strain ATCC 29413 / PCC 7937) (Anabaena variabilis), this protein is Protein translocase subunit SecA.